Consider the following 77-residue polypeptide: Acyl carrier protein (77 aa).

In terms of domain architecture, Carrier spans 2–77 (SSIEERVNKI…SAVDYIKAHS (76 aa)). S37 bears the O-(pantetheine 4'-phosphoryl)serine mark.

The protein belongs to the acyl carrier protein (ACP) family. 4'-phosphopantetheine is transferred from CoA to a specific serine of apo-ACP by AcpS. This modification is essential for activity because fatty acids are bound in thioester linkage to the sulfhydryl of the prosthetic group.

It is found in the cytoplasm. Its pathway is lipid metabolism; fatty acid biosynthesis. Carrier of the growing fatty acid chain in fatty acid biosynthesis. The protein is Acyl carrier protein of Alcanivorax borkumensis (strain ATCC 700651 / DSM 11573 / NCIMB 13689 / SK2).